Here is a 256-residue protein sequence, read N- to C-terminus: L-rhamnose 1-dehydrogenase (NAD(P)(+)) (256 aa).

8 residues coordinate NADP(+): G12, S14, R15, I17, S37, D66, A67, and N93. S146 acts as the Proton donor in catalysis. Beta-L-rhamnose is bound by residues S146, S148, Q156, and Y159. Residues Y159 and K163 each coordinate NADP(+). Y159 functions as the Proton acceptor in the catalytic mechanism. Residue K163 is the Lowers pKa of active site Tyr of the active site. Beta-L-rhamnose is bound at residue T191. I192 contacts NADP(+). A beta-L-rhamnose-binding site is contributed by N197.

Belongs to the short-chain dehydrogenases/reductases (SDR) family.

It carries out the reaction L-rhamnofuranose + NAD(+) = L-rhamnono-1,4-lactone + NADH + H(+). It catalyses the reaction L-rhamnofuranose + NADP(+) = L-rhamnono-1,4-lactone + NADPH + H(+). Its pathway is carbohydrate degradation; L-rhamnose degradation. Its function is as follows. NAD(P)-dependent dehydrogenase that catalyzes the oxidation of L-rhamnose to L-rhamnono-1,4-lactone. Also shows high activity with L-lyxose and low activity with L-mannose and L-fucose. Can utilize either NAD(+) or NADP(+), with a strong preference for NADP(+). Catalyzes the first step in an alternative pathway for rhamnose utilization that does not involve phosphorylated intermediates. This Azotobacter vinelandii (strain DJ / ATCC BAA-1303) protein is L-rhamnose 1-dehydrogenase (NAD(P)(+)).